A 29-amino-acid chain; its full sequence is Cytochrome b6-f complex subunit 8 (29 aa).

A helical membrane pass occupies residues 3 to 23 (IVSIGWAALMVVFTFSLSLVV).

The protein belongs to the PetN family. In terms of assembly, the 4 large subunits of the cytochrome b6-f complex are cytochrome b6, subunit IV (17 kDa polypeptide, PetD), cytochrome f and the Rieske protein, while the 4 small subunits are PetG, PetL, PetM and PetN. The complex functions as a dimer.

The protein localises to the plastid. It localises to the chloroplast thylakoid membrane. Functionally, component of the cytochrome b6-f complex, which mediates electron transfer between photosystem II (PSII) and photosystem I (PSI), cyclic electron flow around PSI, and state transitions. This chain is Cytochrome b6-f complex subunit 8, found in Zygnema circumcarinatum (Green alga).